Consider the following 304-residue polypeptide: N-carbamoyl-D-amino acid hydrolase (304 aa).

The CN hydrolase domain maps to 5–276 (MILAVGQQGP…DEVITAAVDL (272 aa)). Catalysis depends on residues Glu47, Lys127, and Cys172.

Homotetramer.

It catalyses the reaction an N-carbamoyl-D-amino acid + H2O + 2 H(+) = a D-alpha-amino acid + NH4(+) + CO2. In terms of biological role, the enzyme catalyzes the hydrolysis of N-carbamoyl-D-amino acids to the corresponding which are useful intermediates in the preparation of beta-lactam antibiotics. Industrial production of beta-lactam antibiotics is now being developed using this enzyme. This Rhizobium radiobacter (Agrobacterium tumefaciens) protein is N-carbamoyl-D-amino acid hydrolase.